A 209-amino-acid polypeptide reads, in one-letter code: Uracil phosphoribosyltransferase (209 aa).

5-phospho-alpha-D-ribose 1-diphosphate is bound by residues arginine 79, arginine 104, and 131-139; that span reads DPMLATGGS. Uracil-binding positions include isoleucine 194 and 199–201; that span reads GDA. 5-phospho-alpha-D-ribose 1-diphosphate is bound at residue aspartate 200.

The protein belongs to the UPRTase family. Mg(2+) serves as cofactor.

It catalyses the reaction UMP + diphosphate = 5-phospho-alpha-D-ribose 1-diphosphate + uracil. It participates in pyrimidine metabolism; UMP biosynthesis via salvage pathway; UMP from uracil: step 1/1. With respect to regulation, allosterically activated by GTP. Its function is as follows. Catalyzes the conversion of uracil and 5-phospho-alpha-D-ribose 1-diphosphate (PRPP) to UMP and diphosphate. This is Uracil phosphoribosyltransferase from Chromohalobacter salexigens (strain ATCC BAA-138 / DSM 3043 / CIP 106854 / NCIMB 13768 / 1H11).